The sequence spans 141 residues: Large ribosomal subunit protein uL11 (141 aa).

The protein belongs to the universal ribosomal protein uL11 family. In terms of assembly, part of the ribosomal stalk of the 50S ribosomal subunit. Interacts with L10 and the large rRNA to form the base of the stalk. L10 forms an elongated spine to which L12 dimers bind in a sequential fashion forming a multimeric L10(L12)X complex. Post-translationally, one or more lysine residues are methylated.

Forms part of the ribosomal stalk which helps the ribosome interact with GTP-bound translation factors. The polypeptide is Large ribosomal subunit protein uL11 (Nostoc sp. (strain PCC 7120 / SAG 25.82 / UTEX 2576)).